We begin with the raw amino-acid sequence, 268 residues long: Leucyl/phenylalanyl-tRNA--protein transferase (268 aa).

This sequence belongs to the L/F-transferase family.

It is found in the cytoplasm. The enzyme catalyses N-terminal L-lysyl-[protein] + L-leucyl-tRNA(Leu) = N-terminal L-leucyl-L-lysyl-[protein] + tRNA(Leu) + H(+). The catalysed reaction is N-terminal L-arginyl-[protein] + L-leucyl-tRNA(Leu) = N-terminal L-leucyl-L-arginyl-[protein] + tRNA(Leu) + H(+). It carries out the reaction L-phenylalanyl-tRNA(Phe) + an N-terminal L-alpha-aminoacyl-[protein] = an N-terminal L-phenylalanyl-L-alpha-aminoacyl-[protein] + tRNA(Phe). Its function is as follows. Functions in the N-end rule pathway of protein degradation where it conjugates Leu, Phe and, less efficiently, Met from aminoacyl-tRNAs to the N-termini of proteins containing an N-terminal arginine or lysine. The chain is Leucyl/phenylalanyl-tRNA--protein transferase from Zymomonas mobilis subsp. mobilis (strain ATCC 31821 / ZM4 / CP4).